A 396-amino-acid polypeptide reads, in one-letter code: Elongation factor Tu (396 aa).

One can recognise a tr-type G domain in the interval 10-206; it reads KPHLNIGTIG…AVDENVPDPV (197 aa). Positions 19-26 are G1; the sequence is GHVDHGKT. Residue 19–26 participates in GTP binding; that stretch reads GHVDHGKT. Residue Thr-26 coordinates Mg(2+). The interval 62-66 is G2; the sequence is GITIN. The segment at 83 to 86 is G3; the sequence is DAPG. GTP-binding positions include 83–87 and 138–141; these read DAPGH and NKSD. Residues 138 to 141 are G4; that stretch reads NKSD. Residues 176-178 form a G5 region; that stretch reads SAL.

The protein belongs to the TRAFAC class translation factor GTPase superfamily. Classic translation factor GTPase family. EF-Tu/EF-1A subfamily. In terms of assembly, monomer.

It is found in the cytoplasm. It carries out the reaction GTP + H2O = GDP + phosphate + H(+). GTP hydrolase that promotes the GTP-dependent binding of aminoacyl-tRNA to the A-site of ribosomes during protein biosynthesis. This chain is Elongation factor Tu, found in Kocuria rhizophila (strain ATCC 9341 / DSM 348 / NBRC 103217 / DC2201).